Reading from the N-terminus, the 316-residue chain is UDP-N-acetylenolpyruvoylglucosamine reductase (316 aa).

In terms of domain architecture, FAD-binding PCMH-type spans 27–225 (VGGKAERFYR…KTAINALLKK (199 aa)). The active site involves Arg190. The Proton donor role is filled by Ser239. The active site involves Glu309.

Belongs to the MurB family. The cofactor is FAD.

The protein localises to the cytoplasm. It catalyses the reaction UDP-N-acetyl-alpha-D-muramate + NADP(+) = UDP-N-acetyl-3-O-(1-carboxyvinyl)-alpha-D-glucosamine + NADPH + H(+). It participates in cell wall biogenesis; peptidoglycan biosynthesis. In terms of biological role, cell wall formation. In Coxiella burnetii (strain Dugway 5J108-111), this protein is UDP-N-acetylenolpyruvoylglucosamine reductase.